Reading from the N-terminus, the 452-residue chain is MGKYFGTDGVRGVANSELTAELAYRLGRAGGYVLSKHLPEGEQPKVLIGRDTRISGHMLEGALIAGLLSIGAEVMRLGVISTPGVAYLTKSLDATAGVMISASHNPVADNGIKFFGSDGFKLDDATEQEIEDILDAAEDTLPRPTGKDLGFVSDYYEGAQKYLQMLKQTVEEDFDGLHIALDCAHGATSGLAARLFADLEANVSTIGNSPNGLNINEGVGSTHPEHLAEFVREKGADMGLAFDGDGDRLIAIDENGDIVDGDKIMYICGKYLSEKGRLKDNTIVATVMSNLGFHKAVEEAGMTALQTAVGDRYVVEEMKKHQYTLGGEQSGHLIFLDHSTTGDGMLSGVQLAEIVKSTGRKLSELAAEMPVYPQKLVNIRVTNKNDAMNGERVLATIQEAEAEMAGNGRILVRASGTEPLVRVMAEAPTAEECDRYVEKIAQVVREDYGVDG.

The active-site Phosphoserine intermediate is Ser103. Residues Ser103, Asp243, Asp245, and Asp247 each coordinate Mg(2+). Ser103 bears the Phosphoserine mark.

The protein belongs to the phosphohexose mutase family. Mg(2+) serves as cofactor. Post-translationally, activated by phosphorylation.

It catalyses the reaction alpha-D-glucosamine 1-phosphate = D-glucosamine 6-phosphate. Functionally, catalyzes the conversion of glucosamine-6-phosphate to glucosamine-1-phosphate. In Exiguobacterium sp. (strain ATCC BAA-1283 / AT1b), this protein is Phosphoglucosamine mutase.